A 328-amino-acid polypeptide reads, in one-letter code: DNA polymerase III subunit delta' (328 aa).

As to quaternary structure, DNA polymerase III contains a core (composed of alpha, epsilon and theta chains) that associates with a tau subunit. This core dimerizes to form the POLIII' complex. PolIII' associates with the gamma complex (composed of gamma, delta, delta', psi and chi chains) and with the beta chain to form the complete DNA polymerase III complex.

It carries out the reaction DNA(n) + a 2'-deoxyribonucleoside 5'-triphosphate = DNA(n+1) + diphosphate. In terms of biological role, DNA polymerase III is a complex, multichain enzyme responsible for most of the replicative synthesis in bacteria. This DNA polymerase also exhibits 3' to 5' exonuclease activity. This chain is DNA polymerase III subunit delta' (holB), found in Buchnera aphidicola subsp. Schizaphis graminum (strain Sg).